Here is a 782-residue protein sequence, read N- to C-terminus: Endonuclease MutS2 (782 aa).

336-343 is an ATP binding site; sequence GPNTGGKT. The Smr domain maps to 707 to 782; it reads LDLRGYRYED…GFGVTVATLK (76 aa).

This sequence belongs to the DNA mismatch repair MutS family. MutS2 subfamily. Homodimer. Binds to stalled ribosomes, contacting rRNA.

In terms of biological role, endonuclease that is involved in the suppression of homologous recombination and thus may have a key role in the control of bacterial genetic diversity. Functionally, acts as a ribosome collision sensor, splitting the ribosome into its 2 subunits. Detects stalled/collided 70S ribosomes which it binds and splits by an ATP-hydrolysis driven conformational change. Acts upstream of the ribosome quality control system (RQC), a ribosome-associated complex that mediates the extraction of incompletely synthesized nascent chains from stalled ribosomes and their subsequent degradation. Probably generates substrates for RQC. The sequence is that of Endonuclease MutS2 from Staphylococcus aureus (strain COL).